The following is a 275-amino-acid chain: NH(3)-dependent NAD(+) synthetase (275 aa).

47–54 (GISGGQDS) serves as a coordination point for ATP. Asp-53 contacts Mg(2+). Deamido-NAD(+) is bound at residue Arg-141. Residue Thr-161 participates in ATP binding. Glu-166 lines the Mg(2+) pocket. 2 residues coordinate deamido-NAD(+): Lys-174 and Asp-181. Residues Lys-190 and Thr-212 each contribute to the ATP site. Deamido-NAD(+) is bound at residue 261 to 262 (HK).

It belongs to the NAD synthetase family. In terms of assembly, homodimer.

It carries out the reaction deamido-NAD(+) + NH4(+) + ATP = AMP + diphosphate + NAD(+) + H(+). It functions in the pathway cofactor biosynthesis; NAD(+) biosynthesis; NAD(+) from deamido-NAD(+) (ammonia route): step 1/1. In terms of biological role, catalyzes the ATP-dependent amidation of deamido-NAD to form NAD. Uses ammonia as a nitrogen source. The polypeptide is NH(3)-dependent NAD(+) synthetase (Lacticaseibacillus casei (strain BL23) (Lactobacillus casei)).